The primary structure comprises 238 residues: Protein G1-like8 (238 aa).

Disordered regions lie at residues 1 to 33 (MEGGGGGADGQAQPVAQAPPAMQPMQQLSRYES) and 147 to 238 (KARG…ATRV). Residues 10–27 (GQAQPVAQAPPAMQPMQQ) show a composition bias toward low complexity. The 128-residue stretch at 30-157 (RYESQKRRDW…ARGIPYEKKK (128 aa)) folds into the ALOG domain. The Nuclear localization signal signature appears at 155–159 (KKKRK). Positions 165–176 (QPPPPPPPPPQH) are enriched in pro residues. Composition is skewed to low complexity over residues 177–213 (QPGAAAGEASSSSSAAAAAVAAEGSGSSAAAAAATSQ) and 222–238 (TTTTTASAAAPTTATRV).

This sequence belongs to the plant homeotic and developmental regulators ALOG protein family.

The protein resides in the nucleus. Probable transcription regulator that acts as a developmental regulator by promoting cell growth in response to light. The sequence is that of Protein G1-like8 (G1L8) from Oryza sativa subsp. japonica (Rice).